The sequence spans 188 residues: Threonylcarbamoyl-AMP synthase (188 aa).

A YrdC-like domain is found at 3-188; it reads QLHPSEIKDL…RSGKILRNGQ (186 aa).

This sequence belongs to the SUA5 family. TsaC subfamily.

The protein resides in the cytoplasm. It catalyses the reaction L-threonine + hydrogencarbonate + ATP = L-threonylcarbamoyladenylate + diphosphate + H2O. Its function is as follows. Required for the formation of a threonylcarbamoyl group on adenosine at position 37 (t(6)A37) in tRNAs that read codons beginning with adenine. Catalyzes the conversion of L-threonine, HCO(3)(-)/CO(2) and ATP to give threonylcarbamoyl-AMP (TC-AMP) as the acyladenylate intermediate, with the release of diphosphate. The polypeptide is Threonylcarbamoyl-AMP synthase (Shewanella sp. (strain ANA-3)).